The following is a 257-amino-acid chain: Diaminopimelate epimerase (257 aa).

Substrate-binding residues include N6 and N57. Catalysis depends on C66, which acts as the Proton donor. Substrate is bound by residues 67 to 68 (GN), N170, and 188 to 189 (ER). C198 serves as the catalytic Proton acceptor. 199-200 (GT) provides a ligand contact to substrate.

The protein belongs to the diaminopimelate epimerase family. In terms of assembly, homodimer.

The protein resides in the cytoplasm. The enzyme catalyses (2S,6S)-2,6-diaminopimelate = meso-2,6-diaminopimelate. It participates in amino-acid biosynthesis; L-lysine biosynthesis via DAP pathway; DL-2,6-diaminopimelate from LL-2,6-diaminopimelate: step 1/1. Its function is as follows. Catalyzes the stereoinversion of LL-2,6-diaminopimelate (L,L-DAP) to meso-diaminopimelate (meso-DAP), a precursor of L-lysine and an essential component of the bacterial peptidoglycan. This chain is Diaminopimelate epimerase, found in Chlorobaculum tepidum (strain ATCC 49652 / DSM 12025 / NBRC 103806 / TLS) (Chlorobium tepidum).